Here is a 378-residue protein sequence, read N- to C-terminus: Gibberellin 20 oxidase 2 (378 aa).

Over residues methionine 1 to proline 10 the composition is skewed to polar residues. Residues methionine 1–threonine 26 form a disordered region. Over residues alanine 11 to glutamine 25 the composition is skewed to basic and acidic residues. The Fe2OG dioxygenase domain occupies glutamate 220 to proline 320. Positions 245, 247, and 301 each coordinate Fe cation. Residue arginine 311 is part of the active site.

It belongs to the iron/ascorbate-dependent oxidoreductase family. GA20OX subfamily. Fe(2+) serves as cofactor. The cofactor is L-ascorbate. In terms of tissue distribution, expressed in inflorescence and developing siliques. Detected in seeds, roots, cotyledons and leaves. In seeds, specifically detected at the rim of the embryo and the outer integument.

It catalyses the reaction gibberellin A12 + 2 2-oxoglutarate + 3 O2 + H(+) = gibberellin A9 + 2 succinate + 3 CO2 + 2 H2O. The catalysed reaction is gibberellin A12 + 2-oxoglutarate + O2 = gibberellin A15 + succinate + CO2. The enzyme catalyses gibberellin A15 + 2-oxoglutarate + O2 = gibberellin A24 + succinate + CO2 + H2O. It carries out the reaction gibberellin A53 + 2-oxoglutarate + O2 = gibberellin A44 + succinate + CO2. It catalyses the reaction gibberellin A12 + 3 2-oxoglutarate + 3 O2 = gibberellin A25 + 3 succinate + 3 CO2 + H2O + H(+). It functions in the pathway plant hormone biosynthesis; gibberellin biosynthesis. In terms of biological role, key oxidase enzyme in the biosynthesis of gibberellin that catalyzes the conversion of GA12 to GA9, via a three-step oxidation at C-20 of the GA skeleton, and GA25 is also formed as a minor product. GA53 is less effectively oxidized than GA12 and is only oxidized one step to GA44. Involved in the promotion of the floral transition, fertility and silique elongation, but plays only a minor role in elongation of seedling organs. Acts redundantly with GA20OX1. The sequence is that of Gibberellin 20 oxidase 2 (GA20OX2) from Arabidopsis thaliana (Mouse-ear cress).